We begin with the raw amino-acid sequence, 402 residues long: Indole-3-glycerol phosphate synthase, chloroplastic (402 aa).

Residues methionine 1 to serine 65 constitute a chloroplast transit peptide.

The protein belongs to the TrpC family. Expressed in leaves.

Its subcellular location is the plastid. The protein localises to the chloroplast. It carries out the reaction 1-(2-carboxyphenylamino)-1-deoxy-D-ribulose 5-phosphate + H(+) = (1S,2R)-1-C-(indol-3-yl)glycerol 3-phosphate + CO2 + H2O. It functions in the pathway amino-acid biosynthesis; L-tryptophan biosynthesis; L-tryptophan from chorismate: step 4/5. Functionally, indole-3-glycerol phosphate synthase required for tryptophan biosynthesis. This chain is Indole-3-glycerol phosphate synthase, chloroplastic, found in Arabidopsis thaliana (Mouse-ear cress).